The following is a 252-amino-acid chain: 5'-nucleotidase SurE (252 aa).

Residues Asp8, Asp9, Ser39, and Asn95 each contribute to the a divalent metal cation site.

It belongs to the SurE nucleotidase family. It depends on a divalent metal cation as a cofactor.

Its subcellular location is the cytoplasm. The enzyme catalyses a ribonucleoside 5'-phosphate + H2O = a ribonucleoside + phosphate. Functionally, nucleotidase that shows phosphatase activity on nucleoside 5'-monophosphates. This Clostridium botulinum (strain Loch Maree / Type A3) protein is 5'-nucleotidase SurE.